Here is a 1260-residue protein sequence, read N- to C-terminus: Phosphatidylinositol 3,4,5-trisphosphate 5-phosphatase 2 (1260 aa).

The SH2 domain maps to 25-121 (WYHRDLSRAA…GLVCALLLPV (97 aa)). Over residues 126 to 136 (ELDPPDERDAS) the composition is skewed to basic and acidic residues. Residues 126–178 (ELDPPDERDASDGEDEKPPLPPRSGTSVSAPLGPSSPPAAPEPPTPAVESAPN) form a disordered region. Serine 136 is modified (phosphoserine). Pro residues predominate over residues 159 to 171 (PSSPPAAPEPPTP). 2 positions are modified to phosphoserine: serine 243 and serine 355. Position 888 is a phosphotyrosine (tyrosine 888). Serine 892 carries the post-translational modification Phosphoserine. The segment at 899-1120 (GAKSKAPSVS…FLGEAAGGDD (222 aa)) is disordered. The span at 940-952 (PPPTGRPPAPPRA) shows a compositional bias: pro residues. An SH3-binding motif is present at residues 946-951 (PPAPPR). Residues 953 to 967 (APREEPLTPRLKPEG) are compositionally biased toward basic and acidic residues. Threonine 960 is modified (phosphothreonine). The NPXY motif signature appears at 985–988 (NPAY). Tyrosine 988 is subject to Phosphotyrosine. Pro residues-rich tracts occupy residues 998 to 1013 (LLPP…PVPP), 1050 to 1061 (LPPPDFPPPPLP), and 1090 to 1108 (LPPP…PLPP). A Phosphoserine modification is found at serine 1133. Residue tyrosine 1164 is modified to Phosphotyrosine. The tract at residues 1181–1200 (EDLAEEAPCPQAGRTGGLGE) is disordered. An SAM domain is found at 1198-1260 (LGEAGMGAWL…LLLDTLQLSK (63 aa)). Residue serine 1259 is modified to Phosphoserine.

Belongs to the inositol 1,4,5-trisphosphate 5-phosphatase family. As to quaternary structure, interacts with tyrosine phosphorylated form of SHC1. Interacts with EGFR. Upon stimulation by the EGF signaling pathway, it forms a complex with SHC1 and EGFR. Interacts with cytoskeletal protein SORBS3/vinexin, promoting its localization to the periphery of cells. Forms a complex with filamin (FLNA or FLNB), actin, GPIb (GP1BA or GP1BB) that regulates cortical and submembraneous actin. Interacts with c-Met/MET, when c-Met/MET is phosphorylated on 'Tyr-1356'. Interacts with p130Cas/BCAR1. Interacts with CENTD3/ARAP3 via its SAM domain. Interacts with c-Cbl/CBL and CAP/SORBS1. Interacts with activated EPHA2 receptor. Interacts with receptor FCGR2A. Interacts with receptor FCGR2B. Interacts with tyrosine kinase ABL1. Interacts with tyrosine kinase TEC. Interacts with CSF1R. Interacts (via N-terminus) with SH3YL1 (via SH3 domain). Interacts with FCRL6 (tyrosine phosphorylated form). Interacts (via SH2 domain) with tyrosine phosphorylated KLRC1 (via ITIM). Interacts with NEDD9/HEF1. In terms of processing, tyrosine phosphorylated by the members of the SRC family after exposure to a diverse array of extracellular stimuli such as insulin, growth factors such as EGF or PDGF, chemokines, integrin ligands and hypertonic and oxidative stress. May be phosphorylated upon IgG receptor FCGR2B-binding. Phosphorylated at Tyr-988 following cell attachment and spreading. Phosphorylated at Tyr-1164 following EGF signaling pathway stimulation. In terms of tissue distribution, expressed abundantly in skeletal muscle tissue.

The protein localises to the cytoplasm. Its subcellular location is the cytosol. It is found in the cytoskeleton. It localises to the membrane. The protein resides in the cell projection. The protein localises to the filopodium. Its subcellular location is the lamellipodium. It is found in the basal cell membrane. It localises to the nucleus. The protein resides in the nucleus speckle. The protein localises to the spindle pole. It carries out the reaction a 1,2-diacyl-sn-glycero-3-phospho-(1D-myo-inositol-3,4,5-trisphosphate) + H2O = a 1,2-diacyl-sn-glycero-3-phospho-(1D-myo-inositol-3,4-bisphosphate) + phosphate. The catalysed reaction is 1,2-dioctanoyl-sn-glycero-3-phospho-(1D-myo-inositol-3,4,5-trisphosphate) + H2O = 1,2-dioctanoyl-sn-glycero-3-phospho-(1D-myo-inositol-3,4-bisphosphate) + phosphate. The enzyme catalyses 1,2-dihexadecanoyl-sn-glycero-3-phospho-(1D-myo-inositol-3,4,5-trisphosphate) + H2O = 1,2-dihexadecanoyl-sn-glycero-3-phospho-(1D-myo-inositol-3,4-bisphosphate) + phosphate. Activated upon translocation to the sites of synthesis of PtdIns(3,4,5)P3 in the membrane. Enzymatic activity is enhanced in the presence of phosphatidylserine. In terms of biological role, phosphatidylinositol (PtdIns) phosphatase that specifically hydrolyzes the 5-phosphate of phosphatidylinositol-3,4,5-trisphosphate (PtdIns(3,4,5)P3) to produce PtdIns(3,4)P2, thereby negatively regulating the PI3K (phosphoinositide 3-kinase) pathways. Required for correct mitotic spindle orientation and therefore progression of mitosis. Plays a central role in regulation of PI3K-dependent insulin signaling, although the precise molecular mechanisms and signaling pathways remain unclear. While overexpression reduces both insulin-stimulated MAP kinase and Akt activation, its absence does not affect insulin signaling or GLUT4 trafficking. Confers resistance to dietary obesity. May act by regulating AKT2, but not AKT1, phosphorylation at the plasma membrane. Part of a signaling pathway that regulates actin cytoskeleton remodeling. Required for the maintenance and dynamic remodeling of actin structures as well as in endocytosis, having a major impact on ligand-induced EGFR internalization and degradation. Participates in regulation of cortical and submembraneous actin by hydrolyzing PtdIns(3,4,5)P3 thereby regulating membrane ruffling. Regulates cell adhesion and cell spreading. Required for HGF-mediated lamellipodium formation, cell scattering and spreading. Acts as a negative regulator of EPHA2 receptor endocytosis by inhibiting via PI3K-dependent Rac1 activation. Acts as a regulator of neuritogenesis by regulating PtdIns(3,4,5)P3 level and is required to form an initial protrusive pattern, and later, maintain proper neurite outgrowth. Acts as a negative regulator of the FC-gamma-RIIA receptor (FCGR2A). Mediates signaling from the FC-gamma-RIIB receptor (FCGR2B), playing a central role in terminating signal transduction from activating immune/hematopoietic cell receptor systems. Involved in EGF signaling pathway. Upon stimulation by EGF, it is recruited by EGFR and dephosphorylates PtdIns(3,4,5)P3. Plays a negative role in regulating the PI3K-PKB pathway, possibly by inhibiting PKB activity. Down-regulates Fc-gamma-R-mediated phagocytosis in macrophages independently of INPP5D/SHIP1. In macrophages, down-regulates NF-kappa-B-dependent gene transcription by regulating macrophage colony-stimulating factor (M-CSF)-induced signaling. Plays a role in the localization of AURKA and NEDD9/HEF1 to the basolateral membrane at interphase in polarized cysts, thereby mediates cell cycle homeostasis, cell polarization and cilia assembly. Additionally promotion of cilia growth is also facilitated by hydrolysis of (PtdIns(3,4,5)P3) to PtdIns(3,4)P2. Promotes formation of apical membrane-initiation sites during the initial stages of lumen formation via Rho family-induced actin filament organization and CTNNB1 localization to cell-cell contacts. May also hydrolyze PtdIns(1,3,4,5)P4, and could thus affect the levels of the higher inositol polyphosphates like InsP6. Involved in endochondral ossification. The sequence is that of Phosphatidylinositol 3,4,5-trisphosphate 5-phosphatase 2 from Sus scrofa (Pig).